Reading from the N-terminus, the 87-residue chain is uncharacterized protein (87 aa).

This is an uncharacterized protein from Dictyostelium discoideum (Social amoeba).